Here is a 371-residue protein sequence, read N- to C-terminus: Putative 26S proteasome regulatory subunit homolog MJ1494 (371 aa).

Residue 161 to 168 (GPPGTGKT) participates in ATP binding.

The protein belongs to the AAA ATPase family.

Its function is as follows. The 26S proteasome is involved in the ATP-dependent degradation of ubiquitinated proteins. The regulatory (or ATPase) complex confers ATP dependency and substrate specificity to the 26S complex. The sequence is that of Putative 26S proteasome regulatory subunit homolog MJ1494 from Methanocaldococcus jannaschii (strain ATCC 43067 / DSM 2661 / JAL-1 / JCM 10045 / NBRC 100440) (Methanococcus jannaschii).